Reading from the N-terminus, the 913-residue chain is Bifunctional uridylyltransferase/uridylyl-removing enzyme (913 aa).

A uridylyltransferase region spans residues 1-358; sequence MFNCDVTAID…PDEERPKKQP (358 aa). Residues 359–729 are uridylyl-removing; the sequence is INARFNQVGD…EHRELALDAV (371 aa). One can recognise an HD domain in the interval 476–592; that stretch reads VDAHTLFLIR…TLFADLVGNV (117 aa). 2 consecutive ACT domains span residues 730–815 and 838–913; these read QVFV…RIPR and IMSL…NDRV.

It belongs to the GlnD family. Requires Mg(2+) as cofactor.

The enzyme catalyses [protein-PII]-L-tyrosine + UTP = [protein-PII]-uridylyl-L-tyrosine + diphosphate. It catalyses the reaction [protein-PII]-uridylyl-L-tyrosine + H2O = [protein-PII]-L-tyrosine + UMP + H(+). Its activity is regulated as follows. Uridylyltransferase (UTase) activity is inhibited by glutamine, while glutamine activates uridylyl-removing (UR) activity. Functionally, modifies, by uridylylation and deuridylylation, the PII regulatory proteins (GlnB and homologs), in response to the nitrogen status of the cell that GlnD senses through the glutamine level. Under low glutamine levels, catalyzes the conversion of the PII proteins and UTP to PII-UMP and PPi, while under higher glutamine levels, GlnD hydrolyzes PII-UMP to PII and UMP (deuridylylation). Thus, controls uridylylation state and activity of the PII proteins, and plays an important role in the regulation of nitrogen assimilation and metabolism. The chain is Bifunctional uridylyltransferase/uridylyl-removing enzyme from Psychrobacter cryohalolentis (strain ATCC BAA-1226 / DSM 17306 / VKM B-2378 / K5).